The following is a 445-amino-acid chain: Chromosome partition protein MukF (445 aa).

Residues 213 to 241 (LSETSNTLKELQDTLQAAGDELQTQILDI) are leucine-zipper.

Belongs to the MukF family. As to quaternary structure, interacts, and probably forms a ternary complex, with MukE and MukB via its C-terminal region. The complex formation is stimulated by calcium or magnesium. It is required for an interaction between MukE and MukB.

The protein resides in the cytoplasm. The protein localises to the nucleoid. In terms of biological role, involved in chromosome condensation, segregation and cell cycle progression. May participate in facilitating chromosome segregation by condensation DNA from both sides of a centrally located replisome during cell division. Not required for mini-F plasmid partitioning. Probably acts via its interaction with MukB and MukE. Overexpression results in anucleate cells. It has a calcium binding activity. This Vibrio vulnificus (strain YJ016) protein is Chromosome partition protein MukF.